The sequence spans 331 residues: 6-phosphogluconolactonase (331 aa).

At K287 the chain carries N6-acetyllysine.

Belongs to the cycloisomerase 2 family.

The catalysed reaction is 6-phospho-D-glucono-1,5-lactone + H2O = 6-phospho-D-gluconate + H(+). The protein operates within carbohydrate degradation; pentose phosphate pathway; D-ribulose 5-phosphate from D-glucose 6-phosphate (oxidative stage): step 2/3. Its function is as follows. Catalyzes the hydrolysis of 6-phosphogluconolactone to 6-phosphogluconate. The chain is 6-phosphogluconolactonase from Escherichia coli O8 (strain IAI1).